A 546-amino-acid polypeptide reads, in one-letter code: Zinc metalloproteinase nas-9 (546 aa).

Residues 1–14 (MIFLLFVVFPFVYA) form the signal peptide. A propeptide spanning residues 15–300 (QLLPELLAGF…GGGGGGRVPR (286 aa)) is cleaved from the precursor. Residue Asn-248 is glycosylated (N-linked (GlcNAc...) asparagine). A Peptidase M12A domain is found at 308 to 507 (SAVQKWDIWK…IRLLKKMYCR (200 aa)). 5 cysteine pairs are disulfide-bonded: Cys-347/Cys-506, Cys-372/Cys-392, Cys-510/Cys-546, Cys-517/Cys-539, and Cys-526/Cys-543. His-401 provides a ligand contact to Zn(2+). Glu-402 is a catalytic residue. Zn(2+) is bound by residues His-405 and His-411. In terms of domain architecture, ShKT spans 510-546 (CDDQNVHCGTWALHGYCKMKEQMKWMNENCKASCDKC).

Zn(2+) is required as a cofactor. As to expression, expressed in hypodermis, uterus and spermatheca.

It localises to the secreted. Functionally, metalloprotease. This Caenorhabditis elegans protein is Zinc metalloproteinase nas-9 (nas-9).